Consider the following 932-residue polypeptide: Phosphoenolpyruvate carboxylase (932 aa).

Residues His164 and Lys594 contribute to the active site.

Belongs to the PEPCase type 1 family. Mg(2+) serves as cofactor.

The enzyme catalyses oxaloacetate + phosphate = phosphoenolpyruvate + hydrogencarbonate. Forms oxaloacetate, a four-carbon dicarboxylic acid source for the tricarboxylic acid cycle. This is Phosphoenolpyruvate carboxylase from Bradyrhizobium diazoefficiens (strain JCM 10833 / BCRC 13528 / IAM 13628 / NBRC 14792 / USDA 110).